The chain runs to 482 residues: Variant surface glycoprotein ANTAT 1.1C (482 aa).

An N-terminal signal peptide occupies residues 1-8 (LHPQQALA). 2 disulfides stabilise this stretch: cysteine 24/cysteine 151 and cysteine 133/cysteine 188. An N-linked (GlcNAc...) asparagine glycan is attached at asparagine 92. Residues asparagine 398 and asparagine 411 are each glycosylated (N-linked (GlcNAc...) asparagine). A lipid anchor (GPI-anchor amidated aspartate) is attached at aspartate 459. Residues 460–482 (SSILVTKKFALSLVSAAFASLLF) constitute a propeptide, removed in mature form.

The protein resides in the cell membrane. Its function is as follows. VSG forms a coat on the surface of the parasite. The trypanosome evades the immune response of the host by expressing a series of antigenically distinct VSGs from an estimated 1000 VSG genes. The protein is Variant surface glycoprotein ANTAT 1.1C of Trypanosoma brucei brucei.